The following is a 360-amino-acid chain: Phospho-N-acetylmuramoyl-pentapeptide-transferase (360 aa).

The next 10 helical transmembrane spans lie at Ala-26–Glu-46, Met-74–Gly-94, Tyr-97–Tyr-117, Trp-132–Thr-152, Ile-168–Ser-188, Gly-199–Ser-219, Ser-236–Phe-256, Val-263–Leu-283, Ile-288–Val-308, and Val-338–Lys-358.

The protein belongs to the glycosyltransferase 4 family. MraY subfamily. The cofactor is Mg(2+).

Its subcellular location is the cell inner membrane. The catalysed reaction is UDP-N-acetyl-alpha-D-muramoyl-L-alanyl-gamma-D-glutamyl-meso-2,6-diaminopimeloyl-D-alanyl-D-alanine + di-trans,octa-cis-undecaprenyl phosphate = di-trans,octa-cis-undecaprenyl diphospho-N-acetyl-alpha-D-muramoyl-L-alanyl-D-glutamyl-meso-2,6-diaminopimeloyl-D-alanyl-D-alanine + UMP. It participates in cell wall biogenesis; peptidoglycan biosynthesis. Catalyzes the initial step of the lipid cycle reactions in the biosynthesis of the cell wall peptidoglycan: transfers peptidoglycan precursor phospho-MurNAc-pentapeptide from UDP-MurNAc-pentapeptide onto the lipid carrier undecaprenyl phosphate, yielding undecaprenyl-pyrophosphoryl-MurNAc-pentapeptide, known as lipid I. This is Phospho-N-acetylmuramoyl-pentapeptide-transferase from Shewanella amazonensis (strain ATCC BAA-1098 / SB2B).